The following is a 294-amino-acid chain: Chelated iron transport system membrane protein YfeC (294 aa).

8 consecutive transmembrane segments (helical) span residues 17–37 (AIWVSAIVGAVCAFLSAYLML), 51–71 (VVPGVAGAYALGFPYAAGAFF), 93–113 (AIIGFIFSTFFAVGLLIVSLN), 140–160 (IIILVSFVILCLIWKDLLAVF), 169–189 (IGLSPLRLKILFFTLLSACTV), 194–214 (TVGAILVIAMVVTPGATAYLL), 221–241 (LLIIAIAIGAITSAFGAYLSF), and 246–266 (ATGGVIVTLQTLVFLPAFFFA).

Belongs to the ABC-3 integral membrane protein family.

The protein resides in the cell inner membrane. Its function is as follows. Part of an ATP-driven transport system YfeABC for chelated iron. The polypeptide is Chelated iron transport system membrane protein YfeC (yfeC) (Yersinia pestis).